A 202-amino-acid chain; its full sequence is ATP-dependent Clp protease proteolytic subunit (202 aa).

Serine 98 acts as the Nucleophile in catalysis. Histidine 123 is an active-site residue.

Belongs to the peptidase S14 family. As to quaternary structure, fourteen ClpP subunits assemble into 2 heptameric rings which stack back to back to give a disk-like structure with a central cavity, resembling the structure of eukaryotic proteasomes.

It is found in the cytoplasm. The catalysed reaction is Hydrolysis of proteins to small peptides in the presence of ATP and magnesium. alpha-casein is the usual test substrate. In the absence of ATP, only oligopeptides shorter than five residues are hydrolyzed (such as succinyl-Leu-Tyr-|-NHMec, and Leu-Tyr-Leu-|-Tyr-Trp, in which cleavage of the -Tyr-|-Leu- and -Tyr-|-Trp bonds also occurs).. In terms of biological role, cleaves peptides in various proteins in a process that requires ATP hydrolysis. Has a chymotrypsin-like activity. Plays a major role in the degradation of misfolded proteins. The chain is ATP-dependent Clp protease proteolytic subunit from Desulfovibrio desulfuricans (strain ATCC 27774 / DSM 6949 / MB).